Consider the following 419-residue polypeptide: eIF5-mimic protein 1 (419 aa).

A disordered region spans residues 1–22; sequence MNKHQKPVLTGQRFKTRKRDEK. K117 carries the N6-acetyllysine modification. The region spanning 248-415 is the W2 domain; that stretch reads VQQSLGTRKE…QNAEEESESE (168 aa). 2 positions are modified to phosphoserine: S412 and S414.

This sequence belongs to the BZW family. Interacts with EIF3E, EIF2S2 and EIF3C.

It localises to the cytoplasm. In terms of biological role, translation initiation regulator which represses non-AUG initiated translation and repeat-associated non-AUG (RAN) initiated translation by acting as a competitive inhibitor of eukaryotic translation initiation factor 5 (EIF5) function. Increases the accuracy of translation initiation by impeding EIF5-dependent translation from non-AUG codons by competing with it for interaction with EIF2S2 within the 43S pre-initiation complex (PIC) in an EIF3C-binding dependent manner. The sequence is that of eIF5-mimic protein 1 (BZW2) from Macaca fascicularis (Crab-eating macaque).